Reading from the N-terminus, the 620-residue chain is Glutathione-regulated potassium-efflux system protein KefC (620 aa).

Topologically, residues 1-3 (MDS) are periplasmic. The chain crosses the membrane as a helical span at residues 4 to 24 (HTLLQALIYLGSAALIVPIAV). Position 25 (R25) is a topological domain, cytoplasmic. The chain crosses the membrane as a helical span at residues 26 to 46 (LGLGSVLGYLIAGCIIGPWGL). Residues 47–53 (RLVTDAE) are Periplasmic-facing. Residues 54 to 74 (SILHFAEIGVVLMLFVIGLEL) traverse the membrane as a helical segment. Residues 75–89 (DPQRLWKLRASVFGG) are Cytoplasmic-facing. A helical transmembrane segment spans residues 90-110 (GALQMVVCGGLIGLFCMFLGL). Topologically, residues 111 to 113 (RWQ) are periplasmic. A helical transmembrane segment spans residues 114 to 134 (VAELIGMTLALSSTAIAMQAM). Residues 135 to 148 (NERNLTVSQVGRSA) lie on the Cytoplasmic side of the membrane. The helical transmembrane segment at 149–169 (FAVLLFQDIAAIPLVAMIPLL) threads the bilayer. Over 170–177 (AASGASTT) the chain is Periplasmic. The helical transmembrane segment at 178–198 (LGAFALSALKVAGALALVVLL) threads the bilayer. Topologically, residues 199–213 (GRYVTRPALRFVARS) are cytoplasmic. A helical transmembrane segment spans residues 214 to 233 (GLREVFSAVALFLVFGFGLL). At 234–236 (LEE) the chain is on the periplasmic side. A helical transmembrane segment spans residues 237–254 (VGLSMAMGAFLAGVLLAS). Topologically, residues 255–269 (SEYRHALESDIEPFK) are cytoplasmic. A helical membrane pass occupies residues 270-290 (GLLLGLFFIGVGMSIDFGTLV). The Periplasmic portion of the chain corresponds to 291–293 (ENP). Residues 294–314 (LRILLLLAGFLAIKIVMLWLV) form a helical membrane-spanning segment. The Cytoplasmic segment spans residues 315 to 326 (ARTLGVPAKQRR). A helical transmembrane segment spans residues 327-347 (WFAVLLGQGSEFAFVVFGAAQ). At 348-358 (MADVLEPEWAK) the chain is on the periplasmic side. Residues 359–379 (ALTLAVALSMAATPIFLVLLT) traverse the membrane as a helical segment. At 380–620 (RMEKTATGEA…ADEPEVKPSI (241 aa)) the chain is on the cytoplasmic side. The RCK N-terminal domain maps to 399–518 (QPRVIVAGFG…AGVAMPERET (120 aa)). Residues 599-620 (QGTAEGKHSGKAADEPEVKPSI) form a disordered region. A compositionally biased stretch (basic and acidic residues) spans 603–620 (EGKHSGKAADEPEVKPSI).

It belongs to the monovalent cation:proton antiporter 2 (CPA2) transporter (TC 2.A.37) family. KefC subfamily. Homodimer. Interacts with the regulatory subunit KefF.

It localises to the cell inner membrane. In terms of biological role, pore-forming subunit of a potassium efflux system that confers protection against electrophiles. Catalyzes K(+)/H(+) antiport. The protein is Glutathione-regulated potassium-efflux system protein KefC of Salmonella typhi.